Consider the following 560-residue polypeptide: MRPEPGGCCCRRPLRANGCVKNGEVRNGYVRSSTATAAAAGQIHHVTENGGLYKRPFNEVFEETPMLVAVLTYVGYGVLTLFGYLRDFLRHWRIEKCHHATEREEQKDFVSLYQDFENFYTRNLYMRIRDNWNRPICSVPGARVDIMERQSHDYNWSFKYTGNIIKGVINMGSYNYLGFARNTGSCQEAAAEVLKEYGAGVCSTRQEIGNLDKHEELEKLVARFLGVEAAMTYGMGFATNSMNIPALVGKGCLILSDELNHASLVLGARLSGATIRIFKHNNMQSLEKLLKDAIVYGQPRTRRPWKKILILVEGIYSMEGSIVRLPEVIALKKKYKAYLYLDEAHSIGALGPSGRGVVDYFGLDPEDVDVMMGTFTKSFGASGGYIGGKKALIDYLRTHSHSAVYATSMSPPVMEQIITSMKCIMGQDGTSLGKECVQQLAENTKYFRRRLKEMGFIIYGNEDSPVVPLMLYMPAKIGAFGREMLKRNVGVVVVGFPATPIIESRARFCLSAAHTKEILDTALKEIDEVGDLLQLKYSRRRLVPLLDRPFDETTYEETED.

Residues 65 to 85 (PMLVAVLTYVGYGVLTLFGYL) form a helical membrane-spanning segment. N6-(pyridoxal phosphate)lysine is present on K377.

The protein belongs to the class-II pyridoxal-phosphate-dependent aminotransferase family. Component of the serine palmitoyltransferase (SPT) complex, which is composed of SPTLC1, SPTLC2 or SPTLC3 and SPTSSA or SPTSSB. The heterodimer consisting of SPTLC1 and SPTLC2/SPTLC3 forms the catalytic core of the enzyme, while SPTSSA or SPTSSB subunits determine substrate specificity. SPT also interacts with ORMDL proteins, especially ORMDL3, which negatively regulate SPT activity in the presence of ceramides. Forms dimers of heterodimers with SPTLC1. It depends on pyridoxal 5'-phosphate as a cofactor.

Its subcellular location is the endoplasmic reticulum membrane. The enzyme catalyses L-serine + hexadecanoyl-CoA + H(+) = 3-oxosphinganine + CO2 + CoA. The catalysed reaction is octadecanoyl-CoA + L-serine + H(+) = 3-oxoeicosasphinganine + CO2 + CoA. It functions in the pathway lipid metabolism; sphingolipid metabolism. SPT complex catalytic activity is negatively regulated by ORMDL proteins, including ORMDL3, in the presence of ceramides. This mechanism allows to maintain ceramide levels at sufficient concentrations for the production of complex sphingolipids, but which prevents the accumulation of ceramides to levels that trigger apoptosis. Its function is as follows. Component of the serine palmitoyltransferase multisubunit enzyme (SPT) that catalyzes the initial and rate-limiting step in sphingolipid biosynthesis by condensing L-serine and activated acyl-CoA (most commonly palmitoyl-CoA) to form long-chain bases. The SPT complex is composed of SPTLC1, SPTLC2 or SPTLC3 and SPTSSA or SPTSSB. Within this complex, the heterodimer consisting of SPTLC1 and SPTLC2/SPTLC3 forms the catalytic core. The composition of the serine palmitoyltransferase (SPT) complex determines the substrate preference. The SPTLC1-SPTLC2-SPTSSA complex shows a strong preference for C16-CoA substrate, while the SPTLC1-SPTLC3-SPTSSA isozyme uses both C14-CoA and C16-CoA as substrates, with a slight preference for C14-CoA. The SPTLC1-SPTLC2-SPTSSB complex shows a strong preference for C18-CoA substrate, while the SPTLC1-SPTLC3-SPTSSB isozyme displays an ability to use a broader range of acyl-CoAs, without apparent preference. Crucial for adipogenesis. This Cricetulus griseus (Chinese hamster) protein is Serine palmitoyltransferase 2 (SPTLC2).